We begin with the raw amino-acid sequence, 279 residues long: MGIVFNYIDPVAFNLGPLSVRWYGIIIAVGILLGYFVAQRALVKAGLHKDTLVDIIFYSALFGFIAARIYFVIFQWPYYVENPSEIIKIWHGGIAIHGGLIGGFIAGVIVCKVKNLNPFQIGDIVAPSIILAQGIGRWGNFMNHEAHGGPVSRAFLEKLHLPNFIIENMYINGQYYHPTFLYESIWDVAGFIILVNIRKHLKLGETFFLYLTWYSIGRFFIEGLRTDSLMLTSNIRVAQLVSILLILISISLIVYRRIKYNPPLYSKVGALPWPTKKVK.

Helical transmembrane passes span Leu18–Ala38, Ile55–Gln75, and Ile89–Ile109. Arg137 lines the a 1,2-diacyl-sn-glycero-3-phospho-(1'-sn-glycerol) pocket. 2 consecutive transmembrane segments (helical) span residues Leu203–Gly223 and Ile235–Tyr255.

Belongs to the Lgt family.

It is found in the cell membrane. It catalyses the reaction L-cysteinyl-[prolipoprotein] + a 1,2-diacyl-sn-glycero-3-phospho-(1'-sn-glycerol) = an S-1,2-diacyl-sn-glyceryl-L-cysteinyl-[prolipoprotein] + sn-glycerol 1-phosphate + H(+). The protein operates within protein modification; lipoprotein biosynthesis (diacylglyceryl transfer). Its function is as follows. Catalyzes the transfer of the diacylglyceryl group from phosphatidylglycerol to the sulfhydryl group of the N-terminal cysteine of a prolipoprotein, the first step in the formation of mature lipoproteins. In Staphylococcus aureus (strain MSSA476), this protein is Phosphatidylglycerol--prolipoprotein diacylglyceryl transferase.